A 212-amino-acid polypeptide reads, in one-letter code: ER lumen protein-retaining receptor 1 (212 aa).

The Lumenal segment spans residues 1 to 4; it reads MNIF. The helical transmembrane segment at 5–24 threads the bilayer; the sequence is RFLGDISHLSAILILLLKIW. Residues 25–32 lie on the Cytoplasmic side of the membrane; sequence KSRSCAGI. The helical transmembrane segment at 33 to 52 threads the bilayer; sequence SGKSQLLFAIVFTTRYLDLF. The segment at 47 to 48 is interaction with the K-D-E-L motif on target proteins; it reads RY. Topologically, residues 53 to 58 are lumenal; the sequence is TNFISL. A helical membrane pass occupies residues 59–79; it reads YNTSMKMVYVASSYATIWMIY. Topologically, residues 80 to 92 are cytoplasmic; the sequence is SKFKATYDGNHDT. A helical membrane pass occupies residues 93–110; that stretch reads FRVEFLIVPTAILAFLVN. The Lumenal portion of the chain corresponds to 111–116; the sequence is HDFTPL. Residues 117–135 form a helical membrane-spanning segment; the sequence is EILWTFSIYLESVAILPQL. The Cytoplasmic segment spans residues 136 to 149; sequence FMVSKTGEAETITS. The chain crosses the membrane as a helical span at residues 150–168; that stretch reads HYLFALGIYRALYLFNWIW. The tract at residues 159 to 169 is interaction with the K-D-E-L motif on target proteins; sequence RALYLFNWIWR. Over 169 to 178 the chain is Lumenal; sequence RYQFEGFFDL. Residues 179–199 traverse the membrane as a helical segment; the sequence is IAIVAGLVQTVLYCDFFYLYI. Over 200 to 212 the chain is Cytoplasmic; sequence TKVLKGKKLSLPA. Residues 204 to 207 form an important for recycling of cargo proteins with the sequence motif K-D-E-L from the Golgi to the endoplasmic reticulum region; it reads KGKK.

Belongs to the ERD2 family.

Its subcellular location is the golgi apparatus membrane. The protein localises to the cytoplasmic vesicle. It localises to the COPI-coated vesicle membrane. It is found in the endoplasmic reticulum membrane. The protein resides in the endoplasmic reticulum-Golgi intermediate compartment membrane. Its function is as follows. Receptor for the C-terminal sequence motif K-D-E-L that is present on endoplasmic reticulum resident proteins and that mediates their recycling from the Golgi back to the endoplasmic reticulum. This chain is ER lumen protein-retaining receptor 1 (kdelr1), found in Xenopus tropicalis (Western clawed frog).